The chain runs to 502 residues: NAD(P)H-quinone oxidoreductase chain 4, chloroplastic (502 aa).

13 helical membrane-spanning segments follow: residues 4–24 (YPWL…IPLL), 39–59 (LGIC…HFDI), 89–109 (IGLT…AWPV), 115–132 (LFHS…GLFT), 136–156 (ILLF…LLSM), 169–189 (FILY…TMGL), 209–229 (IALE…KLPI), 244–264 (HYST…YGLI), 276–296 (SIFA…AASI), 315–335 (MGFV…GAIL), 387–407 (SLAL…PGIV), 418–438 (IIIT…LLSM), and 466–486 (IFIS…PNLI).

This sequence belongs to the complex I subunit 4 family.

It localises to the plastid. Its subcellular location is the chloroplast thylakoid membrane. It catalyses the reaction a plastoquinone + NADH + (n+1) H(+)(in) = a plastoquinol + NAD(+) + n H(+)(out). It carries out the reaction a plastoquinone + NADPH + (n+1) H(+)(in) = a plastoquinol + NADP(+) + n H(+)(out). This is NAD(P)H-quinone oxidoreductase chain 4, chloroplastic from Huperzia lucidula (Shining clubmoss).